A 268-amino-acid chain; its full sequence is tRNA pseudouridine synthase A (268 aa).

D54 serves as the catalytic Nucleophile. Y112 lines the substrate pocket.

This sequence belongs to the tRNA pseudouridine synthase TruA family. As to quaternary structure, homodimer.

It carries out the reaction uridine(38/39/40) in tRNA = pseudouridine(38/39/40) in tRNA. Formation of pseudouridine at positions 38, 39 and 40 in the anticodon stem and loop of transfer RNAs. In Bordetella petrii (strain ATCC BAA-461 / DSM 12804 / CCUG 43448), this protein is tRNA pseudouridine synthase A.